The primary structure comprises 339 residues: Phenylalanine--tRNA ligase alpha subunit (339 aa).

E250 contributes to the Mg(2+) binding site.

This sequence belongs to the class-II aminoacyl-tRNA synthetase family. Phe-tRNA synthetase alpha subunit type 1 subfamily. As to quaternary structure, tetramer of two alpha and two beta subunits. Mg(2+) serves as cofactor.

Its subcellular location is the cytoplasm. The catalysed reaction is tRNA(Phe) + L-phenylalanine + ATP = L-phenylalanyl-tRNA(Phe) + AMP + diphosphate + H(+). The chain is Phenylalanine--tRNA ligase alpha subunit from Flavobacterium psychrophilum (strain ATCC 49511 / DSM 21280 / CIP 103535 / JIP02/86).